The chain runs to 360 residues: Farnesyl pyrophosphate synthase (360 aa).

The isopentenyl diphosphate site is built by lysine 52, arginine 55, and glutamine 90. Mg(2+)-binding residues include aspartate 97 and aspartate 101. Position 106 (arginine 106) interacts with dimethylallyl diphosphate. Arginine 107 provides a ligand contact to isopentenyl diphosphate. 5 residues coordinate dimethylallyl diphosphate: lysine 194, threonine 195, glutamine 237, lysine 254, and lysine 263.

The protein belongs to the FPP/GGPP synthase family. Mg(2+) is required as a cofactor.

It carries out the reaction isopentenyl diphosphate + dimethylallyl diphosphate = (2E)-geranyl diphosphate + diphosphate. The catalysed reaction is isopentenyl diphosphate + (2E)-geranyl diphosphate = (2E,6E)-farnesyl diphosphate + diphosphate. Its pathway is isoprenoid biosynthesis; farnesyl diphosphate biosynthesis; farnesyl diphosphate from geranyl diphosphate and isopentenyl diphosphate: step 1/1. It functions in the pathway isoprenoid biosynthesis; geranyl diphosphate biosynthesis; geranyl diphosphate from dimethylallyl diphosphate and isopentenyl diphosphate: step 1/1. In terms of biological role, farnesyl pyrophosphate synthase; part of the second module of ergosterol biosynthesis pathway that includes the middle steps of the pathway. The second module involves the formation of farnesyl diphosphate, which is also an important intermediate in the biosynthesis of ubiquinone, dolichol, heme and prenylated proteins. This module also plays a key role in the biosynthesis of triterpenes such as ganoderic acids (GA), a group of highly oxygenated lanostane-type triterpenoids which are well recognized as a main group of unique bioactive compounds in the medicinal mushroom Ganoderma lucidum. Activity by the mevalonate kinase first converts mevalonate into 5-phosphomevalonate. 5-phosphomevalonate is then further converted to 5-diphosphomevalonate by the phosphomevalonate kinase. The diphosphomevalonate decarboxylase MVD then produces isopentenyl diphosphate. The isopentenyl-diphosphate delta-isomerase then catalyzes the 1,3-allylic rearrangement of the homoallylic substrate isopentenyl (IPP) to its highly electrophilic allylic isomer, dimethylallyl diphosphate (DMAPP). Finally the farnesyl diphosphate synthase FPS catalyzes the sequential condensation of isopentenyl pyrophosphate with dimethylallyl pyrophosphate, and then with the resultant geranylpyrophosphate to the ultimate product farnesyl pyrophosphate. The sequence is that of Farnesyl pyrophosphate synthase from Ganoderma lucidum (Ling zhi medicinal fungus).